The primary structure comprises 638 residues: Threonine--tRNA ligase (638 aa).

The region spanning 1 to 61 (MPVITLPDGS…DADAQLQIIT (61 aa)) is the TGS domain. Residues 243 to 534 (DHRKIGKALN…LTEEFAGFFP (292 aa)) form a catalytic region. Zn(2+)-binding residues include Cys334, His385, and His511.

The protein belongs to the class-II aminoacyl-tRNA synthetase family. Homodimer. Zn(2+) is required as a cofactor.

It localises to the cytoplasm. The catalysed reaction is tRNA(Thr) + L-threonine + ATP = L-threonyl-tRNA(Thr) + AMP + diphosphate + H(+). Functionally, catalyzes the attachment of threonine to tRNA(Thr) in a two-step reaction: L-threonine is first activated by ATP to form Thr-AMP and then transferred to the acceptor end of tRNA(Thr). Also edits incorrectly charged L-seryl-tRNA(Thr). This chain is Threonine--tRNA ligase, found in Alteromonas mediterranea (strain DSM 17117 / CIP 110805 / LMG 28347 / Deep ecotype).